The following is a 236-amino-acid chain: F-box and leucine-rich protein 22 (236 aa).

Residues 1-46 (MHITQLNRECLLCLFSFLDKDSRRSLSRTCSQLRDVFEDPTLWPLL) form the F-box domain. 6 LRR repeats span residues 15–40 (FSFL…FEDP), 43–72 (WPLL…SICW), 98–123 (HESL…TLSG), 124–149 (CGHV…RLEN), 150–175 (CARV…HVDF), and 176–201 (CRNV…AERS).

As to quaternary structure, directly interacts with SKP1 and CUL1. Enriched in cardiac muscle (at protein level).

It localises to the cytoplasm. The protein localises to the myofibril. It is found in the sarcomere. Its subcellular location is the z line. The protein operates within protein modification; protein ubiquitination. Substrate-recognition component of the SCF (SKP1-CUL1-F-box protein)-type E3 ubiquitin ligase complex. Promotes ubiquitination of sarcomeric proteins alpha-actinin-2 (ACTN2) and filamin-C (FLNC). In Mus musculus (Mouse), this protein is F-box and leucine-rich protein 22 (Fbxl22).